A 271-amino-acid polypeptide reads, in one-letter code: Bifunctional protein FolD (271 aa).

NADP(+)-binding positions include 154–156 (GRS), Thr181, and Ile222.

Belongs to the tetrahydrofolate dehydrogenase/cyclohydrolase family. In terms of assembly, homodimer.

The enzyme catalyses (6R)-5,10-methylene-5,6,7,8-tetrahydrofolate + NADP(+) = (6R)-5,10-methenyltetrahydrofolate + NADPH. It catalyses the reaction (6R)-5,10-methenyltetrahydrofolate + H2O = (6R)-10-formyltetrahydrofolate + H(+). The protein operates within one-carbon metabolism; tetrahydrofolate interconversion. Catalyzes the oxidation of 5,10-methylenetetrahydrofolate to 5,10-methenyltetrahydrofolate and then the hydrolysis of 5,10-methenyltetrahydrofolate to 10-formyltetrahydrofolate. The protein is Bifunctional protein FolD of Thermosipho africanus (strain TCF52B).